A 199-amino-acid polypeptide reads, in one-letter code: Cutinase CUT1 (199 aa).

The first 18 residues, 1-18 (MKFTTLATLALGAVSALA), serve as a signal peptide directing secretion. The propeptide occupies 19–27 (APVTELESR). Position 28 is a pyrrolidone carboxylic acid (glutamine 28). Cysteine 31 and cysteine 105 are oxidised to a cystine. Catalysis depends on serine 116, which acts as the Nucleophile. A disulfide bond links cysteine 164 and cysteine 171. Aspartate 168 is an active-site residue. Catalysis depends on histidine 181, which acts as the Proton donor/acceptor.

This sequence belongs to the cutinase family. The 2 disulfide bonds play a critical role in holding the catalytic residues in juxta-position; reduction of the disulfide bridges results in the complete inactivation of the enzyme.

The enzyme catalyses cutin + H2O = cutin monomers.. Catalyzes the hydrolysis of complex carboxylic polyesters found in the cell wall of plants. Degrades cutin, a macromolecule that forms the structure of the plant cuticle. Also degrades suberin, a specialized macromolecule found in the cell wall of various plant tissues. The polypeptide is Cutinase CUT1 (Coprinopsis cinerea (Inky cap fungus)).